Here is a 288-residue protein sequence, read N- to C-terminus: MKDHLVRVATQDGTLRATAAVTTELVDAICRRQGTDPTASVALGRLVTGTALMGSLLKGDQRLALMIEGNGPVKKLHAETDALGQVRGSVKEPISGIAPTETGFDVPAAIGRAGFLHVVKDLGLKEPYRGMVQLYSSEVAEDLAYYLTSSEQVPSTVALGVYLEKDGRISAAGGLLVQALPEGEEALIALLEERLVALPPITTLLRDGKGPRQIIEELFAGIPLGRNEETPLVFRCTCSRSQVLGMLKTLGEEELKDMAAKDEQTSVVCEFCKERYSFSSDEIKALIA.

2 cysteine pairs are disulfide-bonded: C236/C238 and C269/C272.

Belongs to the HSP33 family. In terms of processing, under oxidizing conditions two disulfide bonds are formed involving the reactive cysteines. Under reducing conditions zinc is bound to the reactive cysteines and the protein is inactive.

The protein localises to the cytoplasm. Functionally, redox regulated molecular chaperone. Protects both thermally unfolding and oxidatively damaged proteins from irreversible aggregation. Plays an important role in the bacterial defense system toward oxidative stress. The sequence is that of 33 kDa chaperonin from Syntrophotalea carbinolica (strain DSM 2380 / NBRC 103641 / GraBd1) (Pelobacter carbinolicus).